The sequence spans 197 residues: Inner membrane-spanning protein YciB (197 aa).

5 helical membrane-spanning segments follow: residues 36–56 (IYSATAMLIISSLVVYGALFL), 64–84 (GQWLTLIACLVFGGLTLTFHS), 90–110 (WKAPVVNWLFALGFAGSHFIG), 135–155 (LAWIAFFLFCGAANLFVAFTF), and 162–182 (FKVFGSLGMTVIFLVAQGVYL).

The protein belongs to the YciB family.

It is found in the cell inner membrane. In terms of biological role, plays a role in cell envelope biogenesis, maintenance of cell envelope integrity and membrane homeostasis. The sequence is that of Inner membrane-spanning protein YciB from Pseudomonas putida (strain ATCC 700007 / DSM 6899 / JCM 31910 / BCRC 17059 / LMG 24140 / F1).